The chain runs to 163 residues: Phosphopantetheine adenylyltransferase (163 aa).

Residue Ser-11 participates in substrate binding. Residues 11–12 (SF) and His-19 each bind ATP. The substrate site is built by Lys-43, Ala-76, and Arg-90. Residues 91 to 93 (GLR), Glu-101, and 126 to 132 (WQALSSS) contribute to the ATP site.

The protein belongs to the bacterial CoaD family. As to quaternary structure, homohexamer. Mg(2+) serves as cofactor.

It localises to the cytoplasm. The enzyme catalyses (R)-4'-phosphopantetheine + ATP + H(+) = 3'-dephospho-CoA + diphosphate. It functions in the pathway cofactor biosynthesis; coenzyme A biosynthesis; CoA from (R)-pantothenate: step 4/5. Its function is as follows. Reversibly transfers an adenylyl group from ATP to 4'-phosphopantetheine, yielding dephospho-CoA (dPCoA) and pyrophosphate. This chain is Phosphopantetheine adenylyltransferase, found in Streptococcus pyogenes serotype M6 (strain ATCC BAA-946 / MGAS10394).